The chain runs to 293 residues: 4-hydroxy-tetrahydrodipicolinate synthase (293 aa).

Thr47 is a pyruvate binding site. Residue Tyr135 is the Proton donor/acceptor of the active site. The Schiff-base intermediate with substrate role is filled by Lys164. Ile205 provides a ligand contact to pyruvate.

It belongs to the DapA family. In terms of assembly, homotetramer; dimer of dimers.

It is found in the cytoplasm. The enzyme catalyses L-aspartate 4-semialdehyde + pyruvate = (2S,4S)-4-hydroxy-2,3,4,5-tetrahydrodipicolinate + H2O + H(+). It functions in the pathway amino-acid biosynthesis; L-lysine biosynthesis via DAP pathway; (S)-tetrahydrodipicolinate from L-aspartate: step 3/4. Functionally, catalyzes the condensation of (S)-aspartate-beta-semialdehyde [(S)-ASA] and pyruvate to 4-hydroxy-tetrahydrodipicolinate (HTPA). In Symbiobacterium thermophilum (strain DSM 24528 / JCM 14929 / IAM 14863 / T), this protein is 4-hydroxy-tetrahydrodipicolinate synthase.